Reading from the N-terminus, the 160-residue chain is Cytochrome b6-f complex subunit 4 (160 aa).

A run of 3 helical transmembrane segments spans residues 36 to 56, 95 to 115, and 131 to 151; these read LLYI…GLAV, LLGI…PFIE, and SLFL…CLPI.

The protein belongs to the cytochrome b family. PetD subfamily. The 4 large subunits of the cytochrome b6-f complex are cytochrome b6, subunit IV (17 kDa polypeptide, PetD), cytochrome f and the Rieske protein, while the 4 small subunits are PetG, PetL, PetM and PetN. The complex functions as a dimer.

It localises to the cellular thylakoid membrane. In terms of biological role, component of the cytochrome b6-f complex, which mediates electron transfer between photosystem II (PSII) and photosystem I (PSI), cyclic electron flow around PSI, and state transitions. This Prochlorococcus marinus (strain NATL2A) protein is Cytochrome b6-f complex subunit 4.